The primary structure comprises 539 residues: Chaperonin GroEL (539 aa).

ATP contacts are provided by residues 29-32, 86-90, G413, 476-478, and D492; these read TIGP, DGTTT, and NAA.

It belongs to the chaperonin (HSP60) family. In terms of assembly, forms a cylinder of 14 subunits composed of two heptameric rings stacked back-to-back. Interacts with the co-chaperonin GroES.

Its subcellular location is the cytoplasm. The catalysed reaction is ATP + H2O + a folded polypeptide = ADP + phosphate + an unfolded polypeptide.. Its function is as follows. Together with its co-chaperonin GroES, plays an essential role in assisting protein folding. The GroEL-GroES system forms a nano-cage that allows encapsulation of the non-native substrate proteins and provides a physical environment optimized to promote and accelerate protein folding. This Staphylococcus haemolyticus (strain JCSC1435) protein is Chaperonin GroEL.